A 561-amino-acid chain; its full sequence is Microtubule-associated protein VP6 (561 aa).

As to quaternary structure, interacts with VP2.

The protein resides in the virion. It is found in the host cytoplasm. Its subcellular location is the host cytoskeleton. Minor inner capsid component. Displays NTPase and RNA 5'-triphosphatase (RTPase) activities. May function as a cofactor of polymerase VP2. Associates with microtubules and plays a role in the formation, structural organization and morphology of viral inclusions, where the assembly of cores and the replication of viral RNA occur. The chain is Microtubule-associated protein VP6 (S6) from Lymantria dispar cypovirus 1 (isolate Rao) (LdCPV-1).